Consider the following 424-residue polypeptide: Trigger factor (424 aa).

A PPIase FKBP-type domain is found at 163–248 (GDTVVLDFEG…IHEIKAKELP (86 aa)).

The protein belongs to the FKBP-type PPIase family. Tig subfamily.

It localises to the cytoplasm. The catalysed reaction is [protein]-peptidylproline (omega=180) = [protein]-peptidylproline (omega=0). Its function is as follows. Involved in protein export. Acts as a chaperone by maintaining the newly synthesized protein in an open conformation. Functions as a peptidyl-prolyl cis-trans isomerase. This is Trigger factor from Bacillus licheniformis (strain ATCC 14580 / DSM 13 / JCM 2505 / CCUG 7422 / NBRC 12200 / NCIMB 9375 / NCTC 10341 / NRRL NRS-1264 / Gibson 46).